The sequence spans 137 residues: Putative FERT-1 protein (137 aa).

This is Putative FERT-1 protein (FERT-1) from Ascaris suum (Pig roundworm).